Consider the following 255-residue polypeptide: Taurine import ATP-binding protein TauB (255 aa).

The ABC transporter domain maps to 2–229 (LQISHLYADY…RFVAGESSRS (228 aa)). 34 to 41 (GPSGCGKT) lines the ATP pocket.

The protein belongs to the ABC transporter superfamily. Taurine importer (TC 3.A.1.17.1) family. The complex is composed of two ATP-binding proteins (TauB), two transmembrane proteins (TauC) and a solute-binding protein (TauA).

Its subcellular location is the cell inner membrane. The enzyme catalyses taurine(out) + ATP + H2O = taurine(in) + ADP + phosphate + H(+). Functionally, part of the ABC transporter complex TauABC involved in taurine import. Responsible for energy coupling to the transport system. This chain is Taurine import ATP-binding protein TauB, found in Escherichia coli O157:H7.